Reading from the N-terminus, the 280-residue chain is tRNA dimethylallyltransferase (280 aa).

9 to 16 serves as a coordination point for ATP; sequence GPTGSGKT. 11–16 lines the substrate pocket; the sequence is TGSGKT. The interaction with substrate tRNA stretch occupies residues 34 to 37; that stretch reads DSVS.

The protein belongs to the IPP transferase family. As to quaternary structure, monomer. Mg(2+) is required as a cofactor.

The enzyme catalyses adenosine(37) in tRNA + dimethylallyl diphosphate = N(6)-dimethylallyladenosine(37) in tRNA + diphosphate. Its function is as follows. Catalyzes the transfer of a dimethylallyl group onto the adenine at position 37 in tRNAs that read codons beginning with uridine, leading to the formation of N6-(dimethylallyl)adenosine (i(6)A). This Acholeplasma laidlawii (strain PG-8A) protein is tRNA dimethylallyltransferase.